An 847-amino-acid polypeptide reads, in one-letter code: B-cell receptor CD22 (847 aa).

The first 19 residues, Met1–Ser19, serve as a signal peptide directing secretion. In terms of domain architecture, Ig-like V-type spans Asp20 to Glu138. Over Asp20–Arg687 the chain is Extracellular. Residues Asn67, Asn101, and Asn112 are each glycosylated (N-linked (GlcNAc...) asparagine). Arg120 is an N-acetylneuraminate binding site. N-linked (GlcNAc...) asparagine glycans are attached at residues Asn135, Asn164, and Asn231. 6 consecutive Ig-like C2-type domains span residues Pro143–Gln235, Pro242–Gln326, Pro331–Gln416, Pro419–Asn500, Pro505–Ser582, and Pro593–Thr676. An intrachain disulfide couples Cys161 to Cys219. Disulfide bonds link Cys265/Cys309 and Cys353/Cys396. N-linked (GlcNAc...) asparagine glycans are attached at residues Asn363, Asn428, Asn445, Asn448, and Asn479. 2 disulfides stabilise this stretch: Cys442/Cys484 and Cys529/Cys571. 2 N-linked (GlcNAc...) asparagine glycosylation sites follow: Asn574 and Asn634. Cys616 and Cys659 are disulfide-bonded. The chain crosses the membrane as a helical span at residues Val688–Leu708. The Cytoplasmic portion of the chain corresponds to Gln709–His847. Phosphoserine is present on residues Ser725, Ser726, and Ser729. 2 short sequence motifs (ITIM motif) span residues Ile760–Leu765 and Val794–Leu799. Position 762 is a phosphotyrosine (Tyr762). 3 positions are modified to phosphotyrosine: Tyr807, Tyr822, and Tyr842. Short sequence motifs (ITIM motif) lie at residues Ile820 to Leu825 and Val840 to Leu845.

Belongs to the immunoglobulin superfamily. SIGLEC (sialic acid binding Ig-like lectin) family. As to quaternary structure, predominantly monomer of isoform CD22-beta. Also found as heterodimer of isoform CD22-beta and a shorter isoform. Interacts with PTPN6/SHP-1, LYN, SYK, PIK3R1/PIK3R2 and PLCG1 upon phosphorylation. Interacts with GRB2, INPP5D and SHC1 upon phosphorylation. May form a complex with INPP5D/SHIP, GRB2 and SHC1. Phosphorylation of Tyr-762, Tyr-807 and Tyr-822 are involved in binding to SYK, GRB2 and SYK, respectively. Phosphorylation of Tyr-842 is involved in binding to SYK, PLCG2 and PIK3R1/PIK3R2. Post-translationally, phosphorylated on tyrosine residues by LYN.

The protein resides in the cell membrane. In terms of biological role, most highly expressed siglec (sialic acid-binding immunoglobulin-like lectin) on B-cells that plays a role in various aspects of B-cell biology including differentiation, antigen presentation, and trafficking to bone marrow. Binds to alpha 2,6-linked sialic acid residues of surface molecules such as CD22 itself, CD45 and IgM in a cis configuration. Can also bind to ligands on other cells as an adhesion molecule in a trans configuration. Acts as an inhibitory coreceptor on the surface of B-cells and inhibits B-cell receptor induced signaling, characterized by inhibition of the calcium mobilization and cellular activation. Mechanistically, the immunoreceptor tyrosine-based inhibitory motif domain is phosphorylated by the Src kinase LYN, which in turn leads to the recruitment of the protein tyrosine phosphatase 1/PTPN6, leading to the negative regulation of BCR signaling. If this negative signaling from is of sufficient strength, apoptosis of the B-cell can be induced. The sequence is that of B-cell receptor CD22 from Pan paniscus (Pygmy chimpanzee).